A 430-amino-acid chain; its full sequence is Phosphomethylpyrimidine synthase (430 aa).

Residues N67, M96, Y125, H161, S183 to G185, D224 to R227, and E263 each bind substrate. Residue H267 participates in Zn(2+) binding. Y290 provides a ligand contact to substrate. H331 contacts Zn(2+). Residues C406, C409, and C413 each contribute to the [4Fe-4S] cluster site.

Belongs to the ThiC family. In terms of assembly, homodimer. [4Fe-4S] cluster is required as a cofactor.

It catalyses the reaction 5-amino-1-(5-phospho-beta-D-ribosyl)imidazole + S-adenosyl-L-methionine = 4-amino-2-methyl-5-(phosphooxymethyl)pyrimidine + CO + 5'-deoxyadenosine + formate + L-methionine + 3 H(+). Its pathway is cofactor biosynthesis; thiamine diphosphate biosynthesis. Catalyzes the synthesis of the hydroxymethylpyrimidine phosphate (HMP-P) moiety of thiamine from aminoimidazole ribotide (AIR) in a radical S-adenosyl-L-methionine (SAM)-dependent reaction. The sequence is that of Phosphomethylpyrimidine synthase from Campylobacter jejuni subsp. jejuni serotype O:23/36 (strain 81-176).